The primary structure comprises 252 residues: Imidazole glycerol phosphate synthase subunit HisF (252 aa).

Active-site residues include Asp-11 and Asp-130.

It belongs to the HisA/HisF family. As to quaternary structure, heterodimer of HisH and HisF.

It localises to the cytoplasm. It carries out the reaction 5-[(5-phospho-1-deoxy-D-ribulos-1-ylimino)methylamino]-1-(5-phospho-beta-D-ribosyl)imidazole-4-carboxamide + L-glutamine = D-erythro-1-(imidazol-4-yl)glycerol 3-phosphate + 5-amino-1-(5-phospho-beta-D-ribosyl)imidazole-4-carboxamide + L-glutamate + H(+). It functions in the pathway amino-acid biosynthesis; L-histidine biosynthesis; L-histidine from 5-phospho-alpha-D-ribose 1-diphosphate: step 5/9. In terms of biological role, IGPS catalyzes the conversion of PRFAR and glutamine to IGP, AICAR and glutamate. The HisF subunit catalyzes the cyclization activity that produces IGP and AICAR from PRFAR using the ammonia provided by the HisH subunit. This Streptococcus gordonii (strain Challis / ATCC 35105 / BCRC 15272 / CH1 / DL1 / V288) protein is Imidazole glycerol phosphate synthase subunit HisF.